A 129-amino-acid chain; its full sequence is UPF0325 protein PC1_0937 (129 aa).

The protein belongs to the UPF0325 family.

The polypeptide is UPF0325 protein PC1_0937 (Pectobacterium carotovorum subsp. carotovorum (strain PC1)).